Reading from the N-terminus, the 421-residue chain is Gamma-glutamyl phosphate reductase (421 aa).

This sequence belongs to the gamma-glutamyl phosphate reductase family.

Its subcellular location is the cytoplasm. It carries out the reaction L-glutamate 5-semialdehyde + phosphate + NADP(+) = L-glutamyl 5-phosphate + NADPH + H(+). It participates in amino-acid biosynthesis; L-proline biosynthesis; L-glutamate 5-semialdehyde from L-glutamate: step 2/2. Functionally, catalyzes the NADPH-dependent reduction of L-glutamate 5-phosphate into L-glutamate 5-semialdehyde and phosphate. The product spontaneously undergoes cyclization to form 1-pyrroline-5-carboxylate. The sequence is that of Gamma-glutamyl phosphate reductase from Dinoroseobacter shibae (strain DSM 16493 / NCIMB 14021 / DFL 12).